The chain runs to 44 residues: Photosystem I reaction center subunit IX (44 aa).

Residues 7 to 27 (YLSVAPVVSTIWFGALAGLLI) traverse the membrane as a helical segment.

It belongs to the PsaJ family.

It is found in the plastid. The protein resides in the chloroplast thylakoid membrane. Its function is as follows. May help in the organization of the PsaE and PsaF subunits. This is Photosystem I reaction center subunit IX from Cucumis sativus (Cucumber).